The primary structure comprises 964 residues: Syndetin (964 aa).

Met1 is subject to N-acetylmethionine. A disordered region spans residues 1–25 (MQKIKSLMTRQGLKSPPESLNDLGA). A Phosphoserine modification is found at Ser15. Coiled-coil stretches lie at residues 81 to 107 (LNLQ…VADL) and 216 to 244 (YSCI…LSKI). 4 positions are modified to phosphoserine: Ser494, Ser498, Ser559, and Ser561. The segment at 532-563 (DEETEDVLASNGYESDEQEKSAYQDYDSDSDV) is disordered. Lys963 participates in a covalent cross-link: Glycyl lysine isopeptide (Lys-Gly) (interchain with G-Cter in SUMO1); alternate. Lys963 is covalently cross-linked (Glycyl lysine isopeptide (Lys-Gly) (interchain with G-Cter in SUMO2); alternate).

This sequence belongs to the syndetin family. As to quaternary structure, component of the endosome-associated retrograde protein (EARP) complex, composed of VPS51, VPS52, VPS53 and VPS50/Syndetin. The EARP complex interacts with EIPR1. Interacts with VPS51 and VPS53 in an EIPR1-independent manner. As to expression, expressed in the brain (at protein level).

The protein localises to the recycling endosome. The protein resides in the membrane. Its function is as follows. Acts as a component of the EARP complex that is involved in endocytic recycling. The EARP complex associates with Rab4-positive endosomes and promotes recycling of internalized transferrin receptor (TFRC) to the plasma membrane. Within the EARP complex, required to tether the complex to recycling endosomes. Not involved in retrograde transport from early and late endosomes to the trans-Golgi network (TGN). This Rattus norvegicus (Rat) protein is Syndetin.